The sequence spans 443 residues: Xaa-Pro dipeptidase (443 aa).

Positions 246, 257, 339, 384, and 423 each coordinate Mn(2+).

Belongs to the peptidase M24B family. Bacterial-type prolidase subfamily. Mn(2+) is required as a cofactor.

It catalyses the reaction Xaa-L-Pro dipeptide + H2O = an L-alpha-amino acid + L-proline. Functionally, splits dipeptides with a prolyl residue in the C-terminal position. This is Xaa-Pro dipeptidase from Pectobacterium carotovorum subsp. carotovorum (strain PC1).